The chain runs to 35 residues: Photosystem II reaction center protein T (35 aa).

A helical membrane pass occupies residues 3-23 (ALVYTFLLVSTLGIIFFAIFF).

It belongs to the PsbT family. In terms of assembly, PSII is composed of 1 copy each of membrane proteins PsbA, PsbB, PsbC, PsbD, PsbE, PsbF, PsbH, PsbI, PsbJ, PsbK, PsbL, PsbM, PsbT, PsbY, PsbZ, Psb30/Ycf12, at least 3 peripheral proteins of the oxygen-evolving complex and a large number of cofactors. It forms dimeric complexes.

Its subcellular location is the plastid. It is found in the chloroplast thylakoid membrane. In terms of biological role, found at the monomer-monomer interface of the photosystem II (PS II) dimer, plays a role in assembly and dimerization of PSII. PSII is a light-driven water plastoquinone oxidoreductase, using light energy to abstract electrons from H(2)O, generating a proton gradient subsequently used for ATP formation. In Bassia hyssopifolia (Fivehorn smotherweed), this protein is Photosystem II reaction center protein T.